Consider the following 79-residue polypeptide: Small ribosomal subunit protein bS21 (79 aa).

2 stretches are compositionally biased toward basic residues: residues 47-59 and 69-79; these read RKQA…HLKK and GVGHRRKKSTT. A disordered region spans residues 47-79; that stretch reads RKQAAAVKRHLKKISRDVSSRRGVGHRRKKSTT.

This sequence belongs to the bacterial ribosomal protein bS21 family.

This Legionella pneumophila (strain Paris) protein is Small ribosomal subunit protein bS21.